Consider the following 380-residue polypeptide: Pregnancy-associated glycoprotein 1 (380 aa).

A signal peptide spans 1 to 15 (MKWLVLLGLVAFSEC). The propeptide at 16–53 (IVKIPLRRLKTMRNVVSGKNMLNNFLKEHAYSLSQISF) is activation peptide. Asn57 and Asn74 each carry an N-linked (GlcNAc...) asparagine glycan. The Peptidase A1 domain maps to 71-377 (YMGNITIGTP…DRGNDRIGLA (307 aa)). Residue Asp89 is part of the active site. An intrachain disulfide couples Cys102 to Cys107. N-linked (GlcNAc...) asparagine glycans are attached at residues Asn125 and Asn182. The cysteines at positions 261 and 265 are disulfide-linked. Asp270 is a catalytic residue. A disulfide bridge connects residues Cys303 and Cys337.

This sequence belongs to the peptidase A1 family. N-Glycosylated; the glycans terminate in either N-acetyl-galactosamine (GalNAc) or N-acetyllactosamine. Terminal GalNAc on Asn-linked glycans is greatly reduced prior to parturition while lactosamine-type N-glycans remain unaltered. Trophoblast and placental tissue. Produced specifically in the invasive binucleate cells of the placenta. Becomes detectable in maternal serum soon after implantation.

It localises to the secreted. The protein resides in the extracellular space. In terms of biological role, appears to be proteolytically inactive. This chain is Pregnancy-associated glycoprotein 1, found in Bos taurus (Bovine).